The primary structure comprises 173 residues: Large ribosomal subunit protein uL29c (173 aa).

The transit peptide at 1-60 (MLSLSIATPGTAAIFRRGTASATSTSSSFHGVRIQHQVSARVPAAATISSSSPKPSVVMM) directs the protein to the chloroplast. A disordered region spans residues 143–173 (KKSIVPRPPPSLKKLQEEEAAEEAAEAAKSA). Ser172 is subject to Phosphoserine.

This sequence belongs to the universal ribosomal protein uL29 family. As to quaternary structure, part of the 50S ribosomal subunit.

Its subcellular location is the plastid. It localises to the chloroplast. The polypeptide is Large ribosomal subunit protein uL29c (RPL29) (Arabidopsis thaliana (Mouse-ear cress)).